A 635-amino-acid chain; its full sequence is Chaperone protein HtpG (635 aa).

Positions 1–343 (MSVETQKETL…SNDLSLNVSR (343 aa)) are a; substrate-binding. Positions 344-560 (EILQKDPIID…EQDMGLQMRQ (217 aa)) are b. A c region spans residues 561–635 (ILEASGQKVP…LNKLLVELSV (75 aa)).

It belongs to the heat shock protein 90 family. As to quaternary structure, homodimer.

It is found in the cytoplasm. Its function is as follows. Molecular chaperone. Has ATPase activity. The protein is Chaperone protein HtpG of Pseudomonas syringae pv. tomato (strain ATCC BAA-871 / DC3000).